Here is a 321-residue protein sequence, read N- to C-terminus: Transaldolase (321 aa).

Residue K132 is the Schiff-base intermediate with substrate of the active site.

Belongs to the transaldolase family. Type 1 subfamily. As to quaternary structure, homodimer.

It localises to the cytoplasm. The enzyme catalyses D-sedoheptulose 7-phosphate + D-glyceraldehyde 3-phosphate = D-erythrose 4-phosphate + beta-D-fructose 6-phosphate. It participates in carbohydrate degradation; pentose phosphate pathway; D-glyceraldehyde 3-phosphate and beta-D-fructose 6-phosphate from D-ribose 5-phosphate and D-xylulose 5-phosphate (non-oxidative stage): step 2/3. Its function is as follows. Transaldolase is important for the balance of metabolites in the pentose-phosphate pathway. The polypeptide is Transaldolase (Rhizobium etli (strain CIAT 652)).